Here is a 696-residue protein sequence, read N- to C-terminus: MTTKAQSYLTHFRNIGIAAHIDAGKTTTTERILYYTGRTHNIGEVHDGAATMDWMEQERERGITITAAATTAKWKRSGTNEEYTINIIDTPGHVDFTIEVERSMRVLDGAVAVFDSSQGVEPQSETVWRQADRYGVPRIAFANKMDKTGASFELVVNDIRERLGAIPAPIQYPMGQENEFKGIIDLVRQRAYTYTNDLGTEIQEHDVPAEYADKVAEMRAQLIEAAAEVDEDLMMMYLEGEEPSVEQLVAALRKGTIDKKIFPVLCGSSLKNKGVQLLLDAVVDYLPSPLDIPAIKGTTENGEVIEYPADPEGKLAALAFKIMADPYVGRLTFVRIYSGTLQAGSYVYNASKDKRERVGRLLKMHANSREEVTELKAGELGAVIGLKDAGTGNTLIGDGDTRVLLESIDVPEPVIKLAIEPKTKADQEKMGIGLQKLAEEDPTFKVETDQESGQTTISGMGELHLEILVDRLKREYKVDANVGAPQVAYRETITKPVDVEGKFVRQSGGRGQFGHVKIKAEPLEPGAGFVFENAVVGGTVPKEYIGPAQKGIEEAMQSGPMLGFPVVDMKVTLYDGSYHEVDSSEMAFKIAGSMALKEAVQKGAPALLEPIMRVEVTVPEEYMGDIIGDLNSRRGQIQGMEARGNAQIVKAFVPLSEMFGYATDMRSMTQGRASYSMFFDHYSQVPNNLAQQLMKK.

The 281-residue stretch at 10–290 folds into the tr-type G domain; the sequence is THFRNIGIAA…AVVDYLPSPL (281 aa). Residues 19–26, 89–93, and 143–146 contribute to the GTP site; these read AHIDAGKT, DTPGH, and NKMD.

This sequence belongs to the TRAFAC class translation factor GTPase superfamily. Classic translation factor GTPase family. EF-G/EF-2 subfamily.

The protein localises to the cytoplasm. In terms of biological role, catalyzes the GTP-dependent ribosomal translocation step during translation elongation. During this step, the ribosome changes from the pre-translocational (PRE) to the post-translocational (POST) state as the newly formed A-site-bound peptidyl-tRNA and P-site-bound deacylated tRNA move to the P and E sites, respectively. Catalyzes the coordinated movement of the two tRNA molecules, the mRNA and conformational changes in the ribosome. The polypeptide is Elongation factor G (Deinococcus geothermalis (strain DSM 11300 / CIP 105573 / AG-3a)).